A 227-amino-acid polypeptide reads, in one-letter code: uncharacterized protein (227 aa).

2 consecutive transmembrane segments (helical) span residues 113-133 and 141-161; these read IMLI…FIVF and FGIC…NGLI.

It localises to the membrane. This is an uncharacterized protein from Dictyostelium discoideum (Social amoeba).